A 504-amino-acid polypeptide reads, in one-letter code: Pyruvate kinase (504 aa).

Residue R53 coordinates substrate. Residues N55, S57, D88, and T89 each coordinate K(+). 55 to 58 (NFSH) contributes to the ATP binding site. Residues R95 and K181 each coordinate ATP. Residue E246 coordinates Mg(2+). The substrate site is built by G269, D270, and T302. Position 270 (D270) interacts with Mg(2+).

Belongs to the pyruvate kinase family. As to quaternary structure, homotetramer. The cofactor is Mg(2+). It depends on K(+) as a cofactor.

The enzyme catalyses pyruvate + ATP = phosphoenolpyruvate + ADP + H(+). It participates in carbohydrate degradation; glycolysis; pyruvate from D-glyceraldehyde 3-phosphate: step 5/5. This chain is Pyruvate kinase (PYK1), found in Debaryomyces hansenii (strain ATCC 36239 / CBS 767 / BCRC 21394 / JCM 1990 / NBRC 0083 / IGC 2968) (Yeast).